Consider the following 293-residue polypeptide: Group 3 late-embryogenesis abundant protein, mitochondrial (293 aa).

A mitochondrion-targeting transit peptide spans 1-31 (MFLARNAGRAGYRGVVAYQQAASFSVSSAKA). Over residues 27 to 43 (SSAKAAGSRSSGGSDAG) the composition is skewed to low complexity. The interval 27 to 52 (SSAKAAGSRSSGGSDAGDYAREAAEH) is disordered. LEA 11-mer repeat repeat units lie at residues 58–68 (KDLKNEASWKA), 83–93 (KDTVKEGVHDM), 123–133 (KNAAQDTAATL), 134–144 (KDKAGSAWNQA), 145–155 (KHVVEDKGEDV), 160–170 (KDTASKVWGKA), 171–181 (KHVAEDVKENA), 199–209 (KDKAADVLSGA), and 210–220 (KHTAENLAHKA). The interval 217 to 293 (AHKAQAAIHD…KGPGQAGGRR (77 aa)) is disordered. Residues 230 to 265 (SSGSQSQSQSQSQYRQGQQQGRQDQQQSKSQWGQTS) show a composition bias toward low complexity. Over residues 279-293 (GPQGGKGPGQAGGRR) the composition is skewed to gly residues.

The protein belongs to the LEA type 4 family.

Its subcellular location is the mitochondrion. Its function is as follows. Mitochondrial heat soluble protein acting as a molecular shield in water-deficient condition. The polypeptide is Group 3 late-embryogenesis abundant protein, mitochondrial (Ramazzottius varieornatus (Water bear)).